Here is a 449-residue protein sequence, read N- to C-terminus: Exodeoxyribonuclease 7 large subunit (449 aa).

Belongs to the XseA family. In terms of assembly, heterooligomer composed of large and small subunits.

It localises to the cytoplasm. It carries out the reaction Exonucleolytic cleavage in either 5'- to 3'- or 3'- to 5'-direction to yield nucleoside 5'-phosphates.. Functionally, bidirectionally degrades single-stranded DNA into large acid-insoluble oligonucleotides, which are then degraded further into small acid-soluble oligonucleotides. In Aliivibrio fischeri (strain MJ11) (Vibrio fischeri), this protein is Exodeoxyribonuclease 7 large subunit.